The primary structure comprises 1119 residues: Solute carrier family 38 member 10 (1119 aa).

A run of 10 helical transmembrane segments spans residues 4–24 (AAAS…GVSV), 36–58 (IVLG…MFLV), 84–104 (LVET…YVVI), 120–140 (VGGT…VLPL), 153–173 (FSAM…LSSL), 229–249 (IFAS…FFGY), 272–292 (MLRV…ILPC), 323–343 (ALTL…PNVE), 345–365 (ILGL…PALI), and 378–398 (VVLW…LSVS). Disordered stretches follow at residues 438–691 (AEDG…EEAG) and 731–1071 (KEIH…DGVI). 5 stretches are compositionally biased toward basic and acidic residues: residues 439–454 (EDGR…REEL), 466–475 (PGREDGKEAP), 493–522 (EAHR…ENKP), 544–559 (DSER…EVGK), and 592–603 (AKEDLGPGDRGL). Residue Ser612 is modified to Phosphoserine. Residues 652 to 667 (PPLPAEKPAPGPGLPP) show a composition bias toward pro residues. Composition is skewed to basic and acidic residues over residues 668 to 677 (EPREQRDVER), 731 to 752 (KEIH…EVHQ), and 763 to 773 (EAPEGKARETV). At Thr772 the chain carries Phosphothreonine. The residue at position 802 (Ser802) is a Phosphoserine. Composition is skewed to basic and acidic residues over residues 832 to 841 (KLRDGQKDAA) and 863 to 876 (PARE…RLAE). The span at 880–889 (GQSQDVTGGS) shows a compositional bias: polar residues. A phosphoserine mark is found at Ser889, Ser965, and Ser997. Composition is skewed to basic and acidic residues over residues 975 to 1005 (HRLD…RGGE), 1012 to 1022 (PRQRPEPELGL), and 1033 to 1042 (DNAKPNRDLK).

This sequence belongs to the amino acid/polyamine transporter 2 family.

It localises to the membrane. The catalysed reaction is L-glutamate(out) = L-glutamate(in). It catalyses the reaction L-glutamine(out) = L-glutamine(in). The enzyme catalyses L-alanine(in) = L-alanine(out). It carries out the reaction L-serine(in) = L-serine(out). The catalysed reaction is L-leucine(in) = L-leucine(out). In terms of biological role, facilitates bidirectional transport of amino acids. May act as a glutamate sensor that regulates glutamate-glutamine cycle and mTOR signaling in the brain. The transport mechanism remains to be elucidated. The chain is Solute carrier family 38 member 10 from Homo sapiens (Human).